We begin with the raw amino-acid sequence, 300 residues long: Protoheme IX farnesyltransferase (300 aa).

9 helical membrane-spanning segments follow: residues 24 to 44 (GLAI…IHEF), 46 to 66 (LETI…VGAS), 99 to 119 (AFTI…MINP), 122 to 142 (AMFG…LKTV), 145 to 165 (LSVF…WVAA), 176 to 196 (LFLI…WFLF), 220 to 240 (IVLY…GYTG), 244 to 264 (LTPV…VYAI), and 275 to 295 (AKTL…VYIL).

It belongs to the UbiA prenyltransferase family. Protoheme IX farnesyltransferase subfamily.

Its subcellular location is the cell inner membrane. The catalysed reaction is heme b + (2E,6E)-farnesyl diphosphate + H2O = Fe(II)-heme o + diphosphate. It functions in the pathway porphyrin-containing compound metabolism; heme O biosynthesis; heme O from protoheme: step 1/1. In terms of biological role, converts heme B (protoheme IX) to heme O by substitution of the vinyl group on carbon 2 of heme B porphyrin ring with a hydroxyethyl farnesyl side group. This is Protoheme IX farnesyltransferase from Flavobacterium psychrophilum (strain ATCC 49511 / DSM 21280 / CIP 103535 / JIP02/86).